Reading from the N-terminus, the 309-residue chain is NAD-dependent protein deacylase sirtuin-5B, mitochondrial (309 aa).

The transit peptide at methionine 1 to proline 35 directs the protein to the mitochondrion. One can recognise a Deacetylase sirtuin-type domain in the interval serine 36 to glutamate 306. Position 57 to 76 (glycine 57 to tryptophan 76) interacts with NAD(+). Substrate is bound by residues tyrosine 101 and arginine 104. Glutamine 139–aspartate 142 contacts NAD(+). The active-site Proton acceptor is histidine 157. Zn(2+) contacts are provided by cysteine 165, cysteine 168, cysteine 206, and cysteine 211. Residues glycine 248–serine 250, asparagine 274–glutamate 276, and cysteine 292 contribute to the NAD(+) site.

The protein belongs to the sirtuin family. Class III subfamily. Zn(2+) is required as a cofactor.

It is found in the mitochondrion. The protein resides in the cytoplasm. The protein localises to the cytosol. Its subcellular location is the nucleus. The enzyme catalyses N(6)-malonyl-L-lysyl-[protein] + NAD(+) + H2O = 2''-O-malonyl-ADP-D-ribose + nicotinamide + L-lysyl-[protein]. It catalyses the reaction N(6)-succinyl-L-lysyl-[protein] + NAD(+) + H2O = 2''-O-succinyl-ADP-D-ribose + nicotinamide + L-lysyl-[protein]. It carries out the reaction N(6)-glutaryl-L-lysyl-[protein] + NAD(+) + H2O = 2''-O-glutaryl-ADP-D-ribose + nicotinamide + L-lysyl-[protein]. In terms of biological role, NAD-dependent lysine demalonylase, desuccinylase and deglutarylase that specifically removes malonyl, succinyl and glutaryl groups on target proteins. Has weak NAD-dependent protein deacetylase activity; however this activity may not be physiologically relevant in vivo. This is NAD-dependent protein deacylase sirtuin-5B, mitochondrial (sirt5-b) from Xenopus laevis (African clawed frog).